The sequence spans 351 residues: sn-glycerol-3-phosphate import ATP-binding protein UgpC (351 aa).

One can recognise an ABC transporter domain in the interval 4–234; it reads ITLKDLVKSY…PATLFVAGFI (231 aa). 36-43 is a binding site for ATP; the sequence is GPSGCGKS.

Belongs to the ABC transporter superfamily. sn-glycerol-3-phosphate importer (TC 3.A.1.1.3) family. The complex is composed of two ATP-binding proteins (UgpC), two transmembrane proteins (UgpA and UgpE) and a solute-binding protein (UgpB).

Its subcellular location is the cell inner membrane. The enzyme catalyses sn-glycerol 3-phosphate(out) + ATP + H2O = sn-glycerol 3-phosphate(in) + ADP + phosphate + H(+). Its function is as follows. Part of the ABC transporter complex UgpBAEC involved in sn-glycerol-3-phosphate (G3P) import. Responsible for energy coupling to the transport system. This chain is sn-glycerol-3-phosphate import ATP-binding protein UgpC, found in Ruegeria sp. (strain TM1040) (Silicibacter sp.).